The chain runs to 315 residues: Methionyl-tRNA formyltransferase (315 aa).

A (6S)-5,6,7,8-tetrahydrofolate-binding site is contributed by 112–115 (SLLP).

Belongs to the Fmt family.

It carries out the reaction L-methionyl-tRNA(fMet) + (6R)-10-formyltetrahydrofolate = N-formyl-L-methionyl-tRNA(fMet) + (6S)-5,6,7,8-tetrahydrofolate + H(+). In terms of biological role, attaches a formyl group to the free amino group of methionyl-tRNA(fMet). The formyl group appears to play a dual role in the initiator identity of N-formylmethionyl-tRNA by promoting its recognition by IF2 and preventing the misappropriation of this tRNA by the elongation apparatus. The polypeptide is Methionyl-tRNA formyltransferase (Rhizobium rhizogenes (strain K84 / ATCC BAA-868) (Agrobacterium radiobacter)).